We begin with the raw amino-acid sequence, 209 residues long: Large ribosomal subunit protein eL13 (209 aa).

It belongs to the eukaryotic ribosomal protein eL13 family. In terms of assembly, component of the 60S large ribosomal subunit (LSU).

It is found in the cytoplasm. Component of the ribosome, a large ribonucleoprotein complex responsible for the synthesis of proteins in the cell. The small ribosomal subunit (SSU) binds messenger RNAs (mRNAs) and translates the encoded message by selecting cognate aminoacyl-transfer RNA (tRNA) molecules. The large subunit (LSU) contains the ribosomal catalytic site termed the peptidyl transferase center (PTC), which catalyzes the formation of peptide bonds, thereby polymerizing the amino acids delivered by tRNAs into a polypeptide chain. The nascent polypeptides leave the ribosome through a tunnel in the LSU and interact with protein factors that function in enzymatic processing, targeting, and the membrane insertion of nascent chains at the exit of the ribosomal tunnel. As part of the LSU, it is probably required for its formation and the maturation of rRNAs. This is Large ribosomal subunit protein eL13 (rpl13) from Dictyostelium discoideum (Social amoeba).